The following is a 173-amino-acid chain: Translation initiation factor IF-3 (173 aa).

Belongs to the IF-3 family. In terms of assembly, monomer.

Its subcellular location is the cytoplasm. Its function is as follows. IF-3 binds to the 30S ribosomal subunit and shifts the equilibrium between 70S ribosomes and their 50S and 30S subunits in favor of the free subunits, thus enhancing the availability of 30S subunits on which protein synthesis initiation begins. This Caulobacter vibrioides (strain ATCC 19089 / CIP 103742 / CB 15) (Caulobacter crescentus) protein is Translation initiation factor IF-3.